The primary structure comprises 203 residues: Inosine triphosphate pyrophosphatase (203 aa).

Position 13 to 18 (13 to 18 (TGNAKK)) interacts with ITP. A Mg(2+)-binding site is contributed by Glu43. ITP-binding positions include Lys55, 71–72 (DT), Lys88, 147–150 (FGWD), Lys170, and 175–176 (HR).

Belongs to the HAM1 NTPase family. Homodimer. It depends on Mg(2+) as a cofactor. Mn(2+) serves as cofactor.

It is found in the cytoplasm. The enzyme catalyses ITP + H2O = IMP + diphosphate + H(+). It carries out the reaction dITP + H2O = dIMP + diphosphate + H(+). The catalysed reaction is XTP + H2O = XMP + diphosphate + H(+). It catalyses the reaction N(6)-hydroxy-dATP + H2O = N(6)-hydroxy-dAMP + diphosphate + H(+). Its function is as follows. Pyrophosphatase that hydrolyzes the non-canonical purine nucleotides inosine triphosphate (ITP), deoxyinosine triphosphate (dITP) as well as 2'-deoxy-N-6-hydroxylaminopurine triphosphate (dHAPTP) and xanthosine 5'-triphosphate (XTP) to their respective monophosphate derivatives. The enzyme does not distinguish between the deoxy- and ribose forms. Probably excludes non-canonical purines from RNA and DNA precursor pools, thus preventing their incorporation into RNA and DNA and avoiding chromosomal lesions. The polypeptide is Inosine triphosphate pyrophosphatase (itpa) (Danio rerio (Zebrafish)).